Here is a 390-residue protein sequence, read N- to C-terminus: Protein YghO (390 aa).

The polypeptide is Protein YghO (yghO) (Escherichia coli (strain K12)).